The following is a 231-amino-acid chain: MIP18 family protein YHR122W (231 aa).

Disordered regions lie at residues 1-26 (MSEFLNENPDILEENQLPTRKEDSTK) and 75-100 (LTSDEDSLPAESEDESVAGGGKEEEE). S2 carries the post-translational modification N-acetylserine. The segment covering 76-90 (TSDEDSLPAESEDES) has biased composition (acidic residues).

Belongs to the MIP18 family.

Functionally, may play a role in chromosome segregation through establishment of sister chromatid cohesion. The sequence is that of MIP18 family protein YHR122W from Saccharomyces cerevisiae (strain ATCC 204508 / S288c) (Baker's yeast).